A 71-amino-acid polypeptide reads, in one-letter code: Large ribosomal subunit protein uL29 (71 aa).

Belongs to the universal ribosomal protein uL29 family.

This is Large ribosomal subunit protein uL29 (rpl29) from Aeropyrum pernix (strain ATCC 700893 / DSM 11879 / JCM 9820 / NBRC 100138 / K1).